Here is a 197-residue protein sequence, read N- to C-terminus: Probable nicotinate-nucleotide adenylyltransferase (197 aa).

The protein belongs to the NadD family.

The catalysed reaction is nicotinate beta-D-ribonucleotide + ATP + H(+) = deamido-NAD(+) + diphosphate. The protein operates within cofactor biosynthesis; NAD(+) biosynthesis; deamido-NAD(+) from nicotinate D-ribonucleotide: step 1/1. Its function is as follows. Catalyzes the reversible adenylation of nicotinate mononucleotide (NaMN) to nicotinic acid adenine dinucleotide (NaAD). The protein is Probable nicotinate-nucleotide adenylyltransferase of Thermosipho melanesiensis (strain DSM 12029 / CIP 104789 / BI429).